The following is a 478-amino-acid chain: Protein trichome birefringence-like 20 (478 aa).

Residues 10 to 30 traverse the membrane as a helical; Signal-anchor for type II membrane protein segment; sequence IGLVIFPLILLTIAPILYLFF. The segment covering 50–68 has biased composition (low complexity); the sequence is SSAISSPSRYNHSSSSSDS. A disordered region spans residues 50 to 125; it reads SSAISSPSRY…KEHRRKKRKR (76 aa). The span at 92 to 110 shows a compositional bias: polar residues; it reads SSSLHNNDRLSISSSNGHH. Positions 112 to 125 are enriched in basic residues; sequence VTPKKEHRRKKRKR. Positions 200–202 match the GDS motif motif; the sequence is GDS. The DCXHWCLPGXXDXWN motif motif lies at 447–461; the sequence is DCVHWCLPGPIDSWN.

It belongs to the PC-esterase family. TBL subfamily.

The protein resides in the membrane. In terms of biological role, may act as a bridging protein that binds pectin and other cell wall polysaccharides. Probably involved in maintaining esterification of pectins. May be involved in the specific O-acetylation of cell wall polymers. The polypeptide is Protein trichome birefringence-like 20 (TBL20) (Arabidopsis thaliana (Mouse-ear cress)).